The following is a 314-amino-acid chain: Nodulation protein D 1 (314 aa).

The 58-residue stretch at 6 to 63 (LDLNLLVVLDALLTERTLTAAASSINLSQPAMSAAVARLRDYFNDELFTTSGRERVLT) folds into the HTH lysR-type domain. A DNA-binding region (H-T-H motif) is located at residues 23-42 (LTAAASSINLSQPAMSAAVA).

It belongs to the LysR transcriptional regulatory family.

Functionally, nodD regulates the expression of the nodABCFE genes which encode other nodulation proteins. NodD is also a negative regulator of its own expression. Binds flavenoids as inducers. In Mesorhizobium japonicum (strain LMG 29417 / CECT 9101 / MAFF 303099) (Mesorhizobium loti (strain MAFF 303099)), this protein is Nodulation protein D 1 (nodD1).